A 130-amino-acid chain; its full sequence is Small ribosomal subunit protein uS8 (130 aa).

This sequence belongs to the universal ribosomal protein uS8 family. As to quaternary structure, part of the 30S ribosomal subunit. Contacts proteins S5 and S12.

In terms of biological role, one of the primary rRNA binding proteins, it binds directly to 16S rRNA central domain where it helps coordinate assembly of the platform of the 30S subunit. The protein is Small ribosomal subunit protein uS8 of Moorella thermoacetica (strain ATCC 39073 / JCM 9320).